Here is a 138-residue protein sequence, read N- to C-terminus: MTEEKIQSYRKKIYVIRQKLKAKKPRFLRYDSDKFFRLGRQEKWRRPYGRDNKTRLKVRGFPAIVSVGYRLPKEVRGFHPSGLRQVIVHNVNDLVKVQNQKDSVIVTIASSVGFKKRLEILNKARELGLKVSNEGVSA.

The protein belongs to the eukaryotic ribosomal protein eL32 family.

In Saccharolobus islandicus (strain Y.N.15.51 / Yellowstone #2) (Sulfolobus islandicus), this protein is Large ribosomal subunit protein eL32.